Reading from the N-terminus, the 587-residue chain is Methylcrotonoyl-CoA carboxylase beta chain, mitochondrial (587 aa).

Residues 1 to 26 (MLRILGRRVVSASKELTSIQQWRIRP) constitute a mitochondrion transit peptide. A CoA carboxyltransferase N-terminal domain is found at 68–324 (MEGILSELRS…AAKQGMEGTF (257 aa)). The tract at residues 68–579 (MEGILSELRS…SAALNRPLED (512 aa)) is carboxyltransferase. One can recognise a CoA carboxyltransferase C-terminal domain in the interval 333-579 (EPLYDINELR…SAALNRPLED (247 aa)). Residues 367-396 (EFDEFKKQYGTTLVTGFARIYGQTVGIIGN) are acyl-CoA binding.

The protein belongs to the AccD/PCCB family. In terms of assembly, probably a heterodimer composed of biotin-containing alpha subunits and beta subunits. As to expression, in roots, cotyledons, leaves, flowers, ovaries, siliques and embryos.

It localises to the mitochondrion matrix. The enzyme catalyses 3-methylbut-2-enoyl-CoA + hydrogencarbonate + ATP = 3-methyl-(2E)-glutaconyl-CoA + ADP + phosphate + H(+). It functions in the pathway amino-acid degradation; L-leucine degradation; (S)-3-hydroxy-3-methylglutaryl-CoA from 3-isovaleryl-CoA: step 2/3. In terms of biological role, carboxyltransferase subunit of the 3-methylcrotonyl-CoA carboxylase, an enzyme that catalyzes the conversion of 3-methylcrotonyl-CoA to 3-methylglutaconyl-CoA, a critical step for leucine and isovaleric acid catabolism. The sequence is that of Methylcrotonoyl-CoA carboxylase beta chain, mitochondrial (MCCB) from Arabidopsis thaliana (Mouse-ear cress).